Consider the following 197-residue polypeptide: Putative NADH dehydrogenase/NAD(P)H nitroreductase Lcho_1290 (197 aa).

The protein belongs to the nitroreductase family. HadB/RutE subfamily. The cofactor is FMN.

This chain is Putative NADH dehydrogenase/NAD(P)H nitroreductase Lcho_1290, found in Leptothrix cholodnii (strain ATCC 51168 / LMG 8142 / SP-6) (Leptothrix discophora (strain SP-6)).